The chain runs to 381 residues: (S)-scoulerine 9-O-methyltransferase (381 aa).

S-adenosyl-L-methionine is bound by residues G223, E246, D266, M267, and K280. H284 serves as the catalytic Proton acceptor.

This sequence belongs to the class I-like SAM-binding methyltransferase superfamily. Cation-independent O-methyltransferase family. COMT subfamily.

The catalysed reaction is (S)-scoulerine + S-adenosyl-L-methionine = (S)-tetrahydrocolumbamine + S-adenosyl-L-homocysteine + H(+). Functionally, produces a precursor of protoberberine alkaloids. This chain is (S)-scoulerine 9-O-methyltransferase (SMT), found in Coptis japonica (Japanese goldthread).